Consider the following 646-residue polypeptide: UvrABC system protein B (646 aa).

The region spanning 25 to 412 (NGIKAGMREQ…QNIVEQIIRP (388 aa)) is the Helicase ATP-binding domain. ATP is bound at residue 38 to 45 (GVTGSGKT). The Beta-hairpin motif lies at 91–114 (YYDFYQPEAYIPQTDTYIDKEASI). The region spanning 428-594 (QVDDLLSEIR…STRRTLREEE (167 aa)) is the Helicase C-terminal domain. The UVR domain maps to 611–646 (ELIIKDLEAEMRDAARNLEFERAARIRDRIMSLKSN).

The protein belongs to the UvrB family. Forms a heterotetramer with UvrA during the search for lesions. Interacts with UvrC in an incision complex.

The protein localises to the cytoplasm. Functionally, the UvrABC repair system catalyzes the recognition and processing of DNA lesions. A damage recognition complex composed of 2 UvrA and 2 UvrB subunits scans DNA for abnormalities. Upon binding of the UvrA(2)B(2) complex to a putative damaged site, the DNA wraps around one UvrB monomer. DNA wrap is dependent on ATP binding by UvrB and probably causes local melting of the DNA helix, facilitating insertion of UvrB beta-hairpin between the DNA strands. Then UvrB probes one DNA strand for the presence of a lesion. If a lesion is found the UvrA subunits dissociate and the UvrB-DNA preincision complex is formed. This complex is subsequently bound by UvrC and the second UvrB is released. If no lesion is found, the DNA wraps around the other UvrB subunit that will check the other stand for damage. The polypeptide is UvrABC system protein B (Methanothermobacter thermautotrophicus (strain ATCC 29096 / DSM 1053 / JCM 10044 / NBRC 100330 / Delta H) (Methanobacterium thermoautotrophicum)).